Here is a 403-residue protein sequence, read N- to C-terminus: Leu/Ile/Val-binding protein homolog 8 (403 aa).

A signal peptide spans 1-26 (MRLSRLLIGASLGVALSSTVFTAALA).

The protein belongs to the leucine-binding protein family.

Its function is as follows. Component of an amino-acid transport system. This Brucella abortus (strain 2308) protein is Leu/Ile/Val-binding protein homolog 8.